The chain runs to 614 residues: Zinc metalloproteinase-disintegrin-like BmMP (614 aa).

The first 20 residues, 1 to 20 (MIQALLVTICLAVFPYQGSS), serve as a signal peptide directing secretion. Positions 21 to 188 (IILESGNVND…WESDEPIRNA (168 aa)) are excised as a propeptide. Asparagine 187 is a glycosylation site (N-linked (GlcNAc...) asparagine). The 197-residue stretch at 205-401 (KYIEFYVAVD…DRPQCILNKP (197 aa)) folds into the Peptidase M12B domain. Disulfide bonds link cysteine 316–cysteine 396, cysteine 356–cysteine 380, cysteine 359–cysteine 364, cysteine 412–cysteine 441, cysteine 423–cysteine 436, cysteine 425–cysteine 431, cysteine 435–cysteine 458, cysteine 449–cysteine 455, cysteine 454–cysteine 480, cysteine 467–cysteine 487, cysteine 474–cysteine 506, cysteine 499–cysteine 511, cysteine 518–cysteine 568, cysteine 533–cysteine 576, cysteine 546–cysteine 556, cysteine 563–cysteine 602, and cysteine 596–cysteine 607. Histidine 341 lines the Zn(2+) pocket. The active site involves glutamate 342. The Zn(2+) site is built by histidine 345 and histidine 351. Residues 409-495 (PAICGNYFVE…ECPTDIFRRN (87 aa)) form the Disintegrin domain. The D/ECD-tripeptide motif lies at 473-475 (DCD).

Belongs to the venom metalloproteinase (M12B) family. P-III subfamily. P-IIIa sub-subfamily. As to quaternary structure, monomer. Zn(2+) serves as cofactor. In terms of tissue distribution, expressed by the venom gland.

It is found in the secreted. Snake venom zinc metalloproteinase that inhibits platelet aggregation and degrades fibrinogen. The chain is Zinc metalloproteinase-disintegrin-like BmMP from Bungarus multicinctus (Many-banded krait).